A 70-amino-acid chain; its full sequence is Sec-independent protein translocase protein TatA (70 aa).

The chain crosses the membrane as a helical span at residues 1–21; the sequence is MFGLGGQELILILLIILLLFG. Residues 50–62 are compositionally biased toward basic and acidic residues; it reads FNKVVDEPPRKTP. A disordered region spans residues 50 to 70; that stretch reads FNKVVDEPPRKTPENSTGSKS.

It belongs to the TatA/E family. Forms a complex with TatC.

Its subcellular location is the cell inner membrane. In terms of biological role, part of the twin-arginine translocation (Tat) system that transports large folded proteins containing a characteristic twin-arginine motif in their signal peptide across membranes. TatA could form the protein-conducting channel of the Tat system. This is Sec-independent protein translocase protein TatA from Chlorobium limicola (strain DSM 245 / NBRC 103803 / 6330).